The chain runs to 816 residues: Fibroblast growth factor receptor 1 (816 aa).

Positions 1 to 23 are cleaved as a signal peptide; the sequence is MLSWRHLVFWAMLVMATLSAARP. Residues 24-374 are Extracellular-facing; sequence APTLPEQVSP…VIMTSPLYLE (351 aa). Residues 25 to 118 form the Ig-like C2-type 1 domain; the sequence is PTLPEQVSPK…ETTFFAVNVS (94 aa). Cys-54 and Cys-100 form a disulfide bridge. N-linked (GlcNAc...) asparagine glycosylation is found at Asn-76 and Asn-116. The disordered stretch occupies residues 118–152; it reads SDRIPSVEDDDDDDEKSSSEEKEAENSKPNPVAPF. Basic and acidic residues predominate over residues 133–143; sequence KSSSEEKEAEN. Ig-like C2-type domains lie at 156–244 and 253–355; these read PEKM…YQLD and PILQ…AWLT. Cys-176 and Cys-228 are disulfide-bonded. Residues Asn-238, Asn-262, Asn-294, Asn-315, and Asn-328 are each glycosylated (N-linked (GlcNAc...) asparagine). Residues Cys-275 and Cys-339 are joined by a disulfide bond. The chain crosses the membrane as a helical span at residues 375 to 395; the sequence is IIIYCTGAFLISCMLVTVIIY. The Cytoplasmic portion of the chain corresponds to 396 to 816; it reads KMKNTTKKTD…QHANGGLKKR (421 aa). Tyr-459 carries the phosphotyrosine; by autocatalysis modification. In terms of domain architecture, Protein kinase spans 474-763; it reads LILGKPLGEG…VAMTSNQEYL (290 aa). ATP-binding positions include 480-486, Lys-510, 558-560, and Asn-564; these read LGEGCFG and EYA. Phosphotyrosine; by autocatalysis is present on residues Tyr-579 and Tyr-581. The active-site Proton acceptor is Asp-619. ATP is bound by residues Arg-623 and Asp-637. 4 positions are modified to phosphotyrosine; by autocatalysis: Tyr-649, Tyr-650, Tyr-726, and Tyr-762. Positions 776 to 816 are disordered; sequence FPDTRSSTCSSGEDSVFSHDPLPDEPCLPKYQHANGGLKKR. Over residues 779 to 788 the composition is skewed to polar residues; it reads TRSSTCSSGE.

The protein belongs to the protein kinase superfamily. Tyr protein kinase family. Fibroblast growth factor receptor subfamily. As to quaternary structure, monomer. Homodimer after ligand binding. Autophosphorylated. Binding of FGF family members together with heparan sulfate proteoglycan or heparin promotes receptor dimerization and autophosphorylation on tyrosine residues. Autophosphorylation occurs in trans between the two FGFR molecules present in the dimer and proceeds in a highly ordered manner. Phosphotyrosine residues provide docking sites for interacting proteins and so are crucial for FGFR1 function and its regulation. Post-translationally, ubiquitinated. FGFR1 is rapidly ubiquitinated after autophosphorylation, leading to internalization and degradation. In terms of processing, N-glycosylated in the endoplasmic reticulum. The N-glycan chains undergo further maturation to an Endo H-resistant form in the Golgi apparatus.

The protein resides in the cell membrane. It localises to the nucleus. It is found in the cytoplasm. Its subcellular location is the cytosol. The protein localises to the cytoplasmic vesicle. The enzyme catalyses L-tyrosyl-[protein] + ATP = O-phospho-L-tyrosyl-[protein] + ADP + H(+). With respect to regulation, present in an inactive conformation in the absence of bound ligand. Ligand binding leads to dimerization and activation by sequential autophosphorylation on tyrosine residues. In terms of biological role, tyrosine-protein kinase that acts as a cell-surface receptor for fibroblast growth factors and plays an essential role in the regulation of embryonic development, cell proliferation, differentiation and migration. Required for normal mesoderm patterning and normal skeletogenesis. Phosphorylates PLCG1, FRS2, GAB1 and SHB. Ligand binding leads to the activation of several signaling cascades. Activation of PLCG1 leads to the production of the cellular signaling molecules diacylglycerol and inositol-1,4,5-trisphosphate. Phosphorylation of FRS2 triggers recruitment of GRB2, GAB1, PIK3R1 and SOS1, and mediates activation of RAS, MAPK1/ERK2, MAPK3/ERK1 and the MAP kinase signaling pathway, as well as of the AKT1 signaling pathway. Promotes phosphorylation of SHC1, STAT1 and PTPN11/SHP2. In the nucleus, enhances RPS6KA1 and CREB1 activity and contributes to the regulation of transcription. FGFR1 signaling is down-regulated by ubiquitination, internalization and degradation. This chain is Fibroblast growth factor receptor 1 (FGFR1), found in Pleurodeles waltl (Iberian ribbed newt).